A 713-amino-acid chain; its full sequence is Phosphoribosylformylglycinamidine synthase subunit PurL (713 aa).

The active site involves histidine 34. ATP contacts are provided by tyrosine 37 and arginine 73. Mg(2+) is bound at residue glutamate 75. Residues 76–79 and arginine 98 contribute to the substrate site; that span reads SHNH. Histidine 77 functions as the Proton acceptor in the catalytic mechanism. Aspartate 99 lines the Mg(2+) pocket. Glutamine 221 lines the substrate pocket. Residue aspartate 249 coordinates Mg(2+). 292-294 provides a ligand contact to substrate; the sequence is ESQ. ATP is bound by residues aspartate 474 and glycine 511. Serine 514 contributes to the substrate binding site.

It belongs to the FGAMS family. As to quaternary structure, monomer. Part of the FGAM synthase complex composed of 1 PurL, 1 PurQ and 2 PurS subunits.

The protein localises to the cytoplasm. It carries out the reaction N(2)-formyl-N(1)-(5-phospho-beta-D-ribosyl)glycinamide + L-glutamine + ATP + H2O = 2-formamido-N(1)-(5-O-phospho-beta-D-ribosyl)acetamidine + L-glutamate + ADP + phosphate + H(+). It participates in purine metabolism; IMP biosynthesis via de novo pathway; 5-amino-1-(5-phospho-D-ribosyl)imidazole from N(2)-formyl-N(1)-(5-phospho-D-ribosyl)glycinamide: step 1/2. Its function is as follows. Part of the phosphoribosylformylglycinamidine synthase complex involved in the purines biosynthetic pathway. Catalyzes the ATP-dependent conversion of formylglycinamide ribonucleotide (FGAR) and glutamine to yield formylglycinamidine ribonucleotide (FGAM) and glutamate. The FGAM synthase complex is composed of three subunits. PurQ produces an ammonia molecule by converting glutamine to glutamate. PurL transfers the ammonia molecule to FGAR to form FGAM in an ATP-dependent manner. PurS interacts with PurQ and PurL and is thought to assist in the transfer of the ammonia molecule from PurQ to PurL. The chain is Phosphoribosylformylglycinamidine synthase subunit PurL from Ignicoccus hospitalis (strain KIN4/I / DSM 18386 / JCM 14125).